The chain runs to 96 residues: Small ribosomal subunit protein bS6 (96 aa).

Belongs to the bacterial ribosomal protein bS6 family.

Binds together with bS18 to 16S ribosomal RNA. The sequence is that of Small ribosomal subunit protein bS6 from Streptomyces griseus subsp. griseus (strain JCM 4626 / CBS 651.72 / NBRC 13350 / KCC S-0626 / ISP 5235).